The sequence spans 963 residues: MDSPSAGYTFEYLIETLNGNSQKKFFNVPKLGGTKYDILPYSIRVLLEAAVRNCDGFLMKKEDVMNILDWKTKQSNVEVPFFPARVVLQDFTGIPAMVDFAAMREAVKTLGGDPKKVHPACPTDLTVDHSLQIDFSKCAIQNAPNPGGGDLQKAGKLSPLKVQSKKLPCRGQTTCRGSCDSGELSRNSGTFSSQIENTPVLCPFHLQPVPEPETVLKNQEVEFGRNRERLQFFKWSSGAFKNVAVIPPGTGMAHQVNLEYLSRVVFEETDLLFPDSVVGTDSHITMVNGLGILGWGVGGIETEAVMLGLPVTLTLPEVVGCELTGSSNAFVTSIDIVLGITKHLRQVGVAGKFVEFFGSGVSQLSIVDRTTIANMCPEYGAILSFFPVDNVTLRHLEHTGFDKTKLESMEKYLKAVKLFRNDENSSEPEYSQVIQINLNSIVASVSGPKRPQDRVAVTDMKSDFQACLNEKVGFKGFQVAAEKQSDTVSVRYDGSEYKLSHGSVVIAAVISCTNNCNPSVMLAAGLLAKKAVEIGLRVKPYIRTSLSPGSGMVTHYLSSSGVLPYLSKLGFDIVGYGCSTCVGNTAPLSEAVLNAVKQGDLVTCGVLSGNKHFEGRLCDCVRANYLASPPLVVAYAIAGTVNIDFQTEPLGTDSTGKEIYLHDIWPSREEVHQMEEEHVILSMFKTLKEKVEMGNKRWNSLEAPDSVLFPWDVKSTYIRCPSFFDKLTKEPAASQPIENAHVLLYLGDSVTTDHISPAGSIARSSAAAKYLTNRGLTPREFNSYGARRGNDAVMTRGTFANIKLFNKFIGKPAPKTIHFPSGQTLDVFEAAELYQKEGIPLIILAGKKYGSGNSRDWAAKGPYLLGVKAVLAESYEKIHKDHLIGIGIAPLEFLPGENADSLGLSGREVFSLSFPEELFPGITLNIKTSTGKEFSVIASFANDVEITLYKHGGLLNFVARKFL.

Positions 512, 578, and 581 each coordinate [4Fe-4S] cluster.

This sequence belongs to the aconitase/IPM isomerase family. As to quaternary structure, interacts with RBCK1 only in iron-rich conditions. Interacts (when associated with the 4Fe-4S) with FBXL5. Interacts with CIAO1 and CIAO2A. [4Fe-4S] cluster serves as cofactor. Ubiquitinated and degraded by the proteasome in presence of high level of iron and oxygen. Ubiquitinated by a SCF complex containing FBXL5. Upon iron and oxygen depletion FBXL5 is degraded, preventing ubiquitination and allowing its RNA-binding activity.

It is found in the cytoplasm. RNA-binding protein that binds to iron-responsive elements (IRES), which are stem-loop structures found in the 5'-UTR of ferritin, and delta aminolevulinic acid synthase mRNAs, and in the 3'-UTR of transferrin receptor mRNA. Binding to the IRE element in ferritin results in the repression of its mRNA translation. Binding of the protein to the transferrin receptor mRNA inhibits the degradation of this otherwise rapidly degraded mRNA. This Mus musculus (Mouse) protein is Iron-responsive element-binding protein 2 (Ireb2).